The chain runs to 198 residues: uncharacterized protein (198 aa).

Disordered stretches follow at residues 15 to 69 and 172 to 198; these read RLGQ…KDTR and FSVK…LWGL. Composition is skewed to basic and acidic residues over residues 37–49 and 56–69; these read HKSF…DQSR and FNEK…KDTR. A compositionally biased stretch (low complexity) spans 176–186; the sequence is ESSNLSNNDSD. Acidic residues predominate over residues 187–198; it reads ASLDEDTLLWGL.

Its subcellular location is the nucleus. This is an uncharacterized protein from Schizosaccharomyces pombe (strain 972 / ATCC 24843) (Fission yeast).